A 164-amino-acid polypeptide reads, in one-letter code: Phosphopantetheine adenylyltransferase (164 aa).

Serine 9 contributes to the substrate binding site. ATP is bound by residues 9–10 (SF) and histidine 17. Residues lysine 41, leucine 73, and arginine 87 each coordinate substrate. ATP contacts are provided by residues 88–90 (GLR), glutamate 98, and 123–129 (YTFLSSS).

This sequence belongs to the bacterial CoaD family. Homohexamer. Mg(2+) is required as a cofactor.

Its subcellular location is the cytoplasm. The catalysed reaction is (R)-4'-phosphopantetheine + ATP + H(+) = 3'-dephospho-CoA + diphosphate. It functions in the pathway cofactor biosynthesis; coenzyme A biosynthesis; CoA from (R)-pantothenate: step 4/5. Reversibly transfers an adenylyl group from ATP to 4'-phosphopantetheine, yielding dephospho-CoA (dPCoA) and pyrophosphate. This is Phosphopantetheine adenylyltransferase from Dictyoglomus thermophilum (strain ATCC 35947 / DSM 3960 / H-6-12).